Reading from the N-terminus, the 189-residue chain is Large ribosomal subunit protein bL9 (189 aa).

The protein belongs to the bacterial ribosomal protein bL9 family.

Binds to the 23S rRNA. The sequence is that of Large ribosomal subunit protein bL9 from Methylocella silvestris (strain DSM 15510 / CIP 108128 / LMG 27833 / NCIMB 13906 / BL2).